The primary structure comprises 70 residues: MNCKIEFMSFLVMTSIVILFLFVSGKVEAEPQCIGSCEMLADCNTACIRMGYLFGQCVGWKTPDMCCCNH.

The N-terminal stretch at 1–29 (MNCKIEFMSFLVMTSIVILFLFVSGKVEA) is a signal peptide. Cystine bridges form between cysteine 33-cysteine 68, cysteine 37-cysteine 57, cysteine 43-cysteine 66, and cysteine 47-cysteine 67.

The protein belongs to the DEFL family.

The protein localises to the secreted. This Arabidopsis thaliana (Mouse-ear cress) protein is Putative defensin-like protein 73 (LCR44).